A 101-amino-acid chain; its full sequence is Small ribosomal subunit protein uS14 (101 aa).

This sequence belongs to the universal ribosomal protein uS14 family. Part of the 30S ribosomal subunit. Contacts proteins S3 and S10.

In terms of biological role, binds 16S rRNA, required for the assembly of 30S particles and may also be responsible for determining the conformation of the 16S rRNA at the A site. The sequence is that of Small ribosomal subunit protein uS14 from Cereibacter sphaeroides (strain ATCC 17029 / ATH 2.4.9) (Rhodobacter sphaeroides).